We begin with the raw amino-acid sequence, 389 residues long: RHOMBOID-like protein 1 (389 aa).

7 helical membrane passes run 56–76 (PWLVPAIVVANIALFAISMFI), 136–156 (IWLHAGVFHVLANMLSLIFIG), 163–183 (FGFVRIGLLYMISGFGGSLLS), 191–211 (ISVGASGALFGLLGAMLSELL), 221–241 (FAALLTLIFIIAINLAVGILP), 244–264 (DNFAHLGGFTSGFLLGFVFLI), and 295–315 (VLWITSLVLLIAGYTAGLVVL). The Nucleophile role is filled by Ser196. His248 acts as the Charge relay system in catalysis.

This sequence belongs to the peptidase S54 family. Expressed in roots, seedlings, leaves, stems and flowers.

The protein resides in the golgi apparatus membrane. The enzyme catalyses Cleaves type-1 transmembrane domains using a catalytic dyad composed of serine and histidine that are contributed by different transmembrane domains.. Functionally, probable rhomboid-type serine protease that catalyzes intramembrane proteolysis. Unable to cleave the Drosophila protein Spitz. The sequence is that of RHOMBOID-like protein 1 from Arabidopsis thaliana (Mouse-ear cress).